The following is a 320-amino-acid chain: Cytochrome f (320 aa).

The N-terminal stretch at 1–35 (MQTRNTFSWIREEITRSISVSLMIYIITWASISSA) is a signal peptide. Heme is bound by residues Tyr-36, Cys-56, Cys-59, and His-60. The chain crosses the membrane as a helical span at residues 286-306 (VQGLLFFLGSVVLAQIFLVLK).

Belongs to the cytochrome f family. The 4 large subunits of the cytochrome b6-f complex are cytochrome b6, subunit IV (17 kDa polypeptide, petD), cytochrome f and the Rieske protein, while the 4 small subunits are PetG, PetL, PetM and PetN. The complex functions as a dimer. Heme is required as a cofactor.

The protein resides in the plastid. Its subcellular location is the chloroplast thylakoid membrane. Functionally, component of the cytochrome b6-f complex, which mediates electron transfer between photosystem II (PSII) and photosystem I (PSI), cyclic electron flow around PSI, and state transitions. This chain is Cytochrome f, found in Crucihimalaya wallichii (Rock-cress).